A 440-amino-acid chain; its full sequence is Xylose isomerase (440 aa).

Residues H101 and D104 contribute to the active site. E232, E268, H271, D296, D307, D309, and D339 together coordinate Mg(2+).

The protein belongs to the xylose isomerase family. Homotetramer. Mg(2+) is required as a cofactor.

Its subcellular location is the cytoplasm. It catalyses the reaction alpha-D-xylose = alpha-D-xylulofuranose. This chain is Xylose isomerase, found in Cronobacter sakazakii (strain ATCC BAA-894) (Enterobacter sakazakii).